The primary structure comprises 718 residues: Coiled-coil domain-containing protein 157 (718 aa).

Residues Leu-300–Gln-603 adopt a coiled-coil conformation. Basic and acidic residues predominate over residues Arg-469 to Leu-482. 2 disordered regions span residues Arg-469–Gln-490 and Pro-617–Pro-690. Over residues Thr-639–Gly-659 the composition is skewed to low complexity.

The polypeptide is Coiled-coil domain-containing protein 157 (Ccdc157) (Mus musculus (Mouse)).